Here is a 1285-residue protein sequence, read N- to C-terminus: Nuclear pore complex protein NUP133 (1285 aa).

2 disordered regions span residues 1 to 53 and 522 to 580; these read MFSP…PAPW and EPPE…QTAR. Residues 31–41 are compositionally biased toward polar residues; that stretch reads TPATQNRNNFI. 2 stretches are compositionally biased toward basic and acidic residues: residues 523–544 and 553–569; these read PPERSLSRKNSSNERSTRDETR and TAGRENSDIQNIEDKGN.

It belongs to the nucleoporin Nup133 family. In terms of assembly, part of the nuclear pore complex (NPC). The NPC has an eight-fold symmetrical structure comprising a central transport channel and two rings, the cytoplasmic and nuclear rings, to which eight filaments are attached. The cytoplasmic filaments have loose ends, while the nuclear filaments are joined in a distal ring, forming a nuclear basket. NPCs are highly dynamic in configuration and composition, and can be devided in 3 subcomplexes, the NUP62 subcomplex, the NUP107-160 subcomplex and the NUP93 subcomplex, containing approximately 30 different nucleoporin proteins.

The protein resides in the nucleus envelope. The protein localises to the nucleus. It is found in the nuclear pore complex. This Arabidopsis thaliana (Mouse-ear cress) protein is Nuclear pore complex protein NUP133.